A 141-amino-acid chain; its full sequence is Lutropin subunit beta (141 aa).

The first 20 residues, 1 to 20 (MERLQGLLLWLLLSPSVVWA), serve as a signal peptide directing secretion. 6 disulfide bridges follow: C29–C77, C43–C92, C46–C130, C54–C108, C58–C110, and C113–C120. The N-linked (GlcNAc...) asparagine glycan is linked to N33.

This sequence belongs to the glycoprotein hormones subunit beta family. As to quaternary structure, heterodimer of a common alpha chain and a unique beta chain which confers biological specificity to thyrotropin, lutropin, follitropin and gonadotropin.

It is found in the secreted. Promotes spermatogenesis and ovulation by stimulating the testes and ovaries to synthesize steroids. In Rattus norvegicus (Rat), this protein is Lutropin subunit beta (Lhb).